A 194-amino-acid chain; its full sequence is MIAYIQGSITYKSPTQLIVDVGGIGYELQISLQTYDSLKDIAASCKIFTYLHITQDAHTLYGFSTIEEKQCFLQLLSVNGIGPRVAITILSALTPEALQQAIMTHDTITLQAVKGIGQKAAQRIILELQGKVGKVGNMLSLQPSGQEAIYQEALAALSKLGIHKSTAEKTVAAILKEHQGEITVESLIKLALKG.

The domain I stretch occupies residues 1–64 (MIAYIQGSIT…QDAHTLYGFS (64 aa)). The segment at 65–143 (TIEEKQCFLQ…KVGNMLSLQP (79 aa)) is domain II. The tract at residues 144 to 150 (SGQEAIY) is flexible linker. The segment at 150–194 (YQEALAALSKLGIHKSTAEKTVAAILKEHQGEITVESLIKLALKG) is domain III.

Belongs to the RuvA family. Homotetramer. Forms an RuvA(8)-RuvB(12)-Holliday junction (HJ) complex. HJ DNA is sandwiched between 2 RuvA tetramers; dsDNA enters through RuvA and exits via RuvB. An RuvB hexamer assembles on each DNA strand where it exits the tetramer. Each RuvB hexamer is contacted by two RuvA subunits (via domain III) on 2 adjacent RuvB subunits; this complex drives branch migration. In the full resolvosome a probable DNA-RuvA(4)-RuvB(12)-RuvC(2) complex forms which resolves the HJ.

The protein resides in the cytoplasm. In terms of biological role, the RuvA-RuvB-RuvC complex processes Holliday junction (HJ) DNA during genetic recombination and DNA repair, while the RuvA-RuvB complex plays an important role in the rescue of blocked DNA replication forks via replication fork reversal (RFR). RuvA specifically binds to HJ cruciform DNA, conferring on it an open structure. The RuvB hexamer acts as an ATP-dependent pump, pulling dsDNA into and through the RuvAB complex. HJ branch migration allows RuvC to scan DNA until it finds its consensus sequence, where it cleaves and resolves the cruciform DNA. The protein is Holliday junction branch migration complex subunit RuvA of Amoebophilus asiaticus (strain 5a2).